Reading from the N-terminus, the 218-residue chain is MSSGAASGTGRGRPRGGGPGPRDPPPGETHKLVVVGGGGVGKSALTIQFIQSYFVSDYDPTIEDSYTKICTVDGIPARLDILDTAGQEEFGAMREQYMRAGNGFLLVFAINDRQSFNEVGKLFTQILRVKDRDDFPIVLVGNKADLENQRQVLRSEASSFSASHHMTYFEASAKLRLNVDEAFEQLVRAVRKYQEQELPPSPPSAPRKKDGGCPCVLL.

Residues 1 to 30 form a disordered region; sequence MSSGAASGTGRGRPRGGGPGPRDPPPGETH. A compositionally biased stretch (gly residues) spans 7–20; the sequence is SGTGRGRPRGGGPG. 36 to 44 lines the GTP pocket; sequence GGGGVGKSA. The short motif at 58–66 is the Effector region element; the sequence is YDPTIEDSY. Residues 83–87, 142–145, and 172–174 each bind GTP; these read DTAGQ, NKAD, and SAK. At Cys-215 the chain carries Cysteine methyl ester. Cys-215 is lipidated: S-geranylgeranyl cysteine. Residues 216–218 constitute a propeptide, removed in mature form; the sequence is VLL.

It belongs to the small GTPase superfamily. Ras family. In terms of assembly, interacts with PLCE1. Interacts (active GTP-bound form preferentially) with RGS14. Interacts with OSBPL3. Interacts with ZDHHC19. Post-translationally, S-palmitoylated by ZDHHC19, leading to increased association with membranes and with rafts/caveolae as well as enhanced cell viability.

It is found in the cell membrane. The catalysed reaction is GTP + H2O = GDP + phosphate + H(+). GTP-binding protein with GTPase activity, likely involved in the regulation of MAPK signaling pathway and thereby controlling multiple cellular processes. Regulates the organization of the actin cytoskeleton. With OSPBL3, modulates integrin beta-1 (ITGB1) activity. This is Ras-related protein R-Ras (Rras) from Mus musculus (Mouse).